An 82-amino-acid chain; its full sequence is Sec-independent protein translocase protein TatA (82 aa).

A helical membrane pass occupies residues Met-1 to Gly-21. Residues Asp-46–Ala-82 are disordered.

The protein belongs to the TatA/E family. The Tat system comprises two distinct complexes: a TatABC complex, containing multiple copies of TatA, TatB and TatC subunits, and a separate TatA complex, containing only TatA subunits. Substrates initially bind to the TatABC complex, which probably triggers association of the separate TatA complex to form the active translocon.

The protein resides in the cell inner membrane. Its function is as follows. Part of the twin-arginine translocation (Tat) system that transports large folded proteins containing a characteristic twin-arginine motif in their signal peptide across membranes. TatA could form the protein-conducting channel of the Tat system. This Aliivibrio fischeri (strain MJ11) (Vibrio fischeri) protein is Sec-independent protein translocase protein TatA.